We begin with the raw amino-acid sequence, 519 residues long: Ribose import ATP-binding protein RbsA 2 (519 aa).

2 consecutive ABC transporter domains span residues 15–252 (FRLR…VGRP) and 262–506 (HEPG…TGVR). An ATP-binding site is contributed by 47–54 (GENGAGKS).

The protein belongs to the ABC transporter superfamily. Ribose importer (TC 3.A.1.2.1) family. As to quaternary structure, the complex is composed of an ATP-binding protein (RbsA), two transmembrane proteins (RbsC) and a solute-binding protein (RbsB).

The protein resides in the cell membrane. The catalysed reaction is D-ribose(out) + ATP + H2O = D-ribose(in) + ADP + phosphate + H(+). Its function is as follows. Part of the ABC transporter complex RbsABC involved in ribose import. Responsible for energy coupling to the transport system. In Rubrobacter xylanophilus (strain DSM 9941 / JCM 11954 / NBRC 16129 / PRD-1), this protein is Ribose import ATP-binding protein RbsA 2.